The sequence spans 207 residues: Arginine exporter protein ArgO (207 aa).

6 consecutive transmembrane segments (helical) span residues 1–21 (MLSTFVQGFFLSAAMILPLGP), 42–62 (LCAISDGFLIGVGVFGGSALL), 67–87 (LLLQFVTWGGVAFLFWYGWGA), 111–131 (VVAIIFAVTWLNPHVYLDTIV), 150–170 (FGAASASVSWFFSLSLLAAWF), and 185–205 (GFICIIMWYIAWQLAKQGLLI).

The protein belongs to the LysE/ArgO transporter (TC 2.A.75) family.

It localises to the cell inner membrane. It catalyses the reaction L-arginine(in) = L-arginine(out). In terms of biological role, involved in the export of arginine. Important to control the intracellular level of arginine and the correct balance between arginine and lysine. In Photorhabdus laumondii subsp. laumondii (strain DSM 15139 / CIP 105565 / TT01) (Photorhabdus luminescens subsp. laumondii), this protein is Arginine exporter protein ArgO.